A 304-amino-acid polypeptide reads, in one-letter code: Hairy/enhancer-of-split related with YRPW motif protein 1 (304 aa).

Positions 1–52 (MKRAHPEYSSSDSELDETIEVEKESADENGNLSSALGSMSPTTSSQILARKR) are disordered. Residues 28 to 47 (ENGNLSSALGSMSPTTSSQI) are compositionally biased toward polar residues. The segment at 48 to 117 (LARKRRRGII…GGKGYFDAHA (70 aa)) is transcriptional repression and interaction with NCOR1 and SIN3A. The bHLH domain maps to 49–104 (ARKRRRGIIEKRRRDRINNSLSELRRLVPSAFEKQGSAKLEKAEILQMTVDHLKML). The Orange domain maps to 122–158 (YRSLGFRECLAEVARYLSIIEGLDASDPLRVRLVSHL). Residues 196–234 (LPQNGHGNAGTTASPTEPHHQGRLGSAHPEAPALRAPPS) form a disordered region. Residues 200 to 210 (GHGNAGTTASP) show a composition bias toward polar residues. The YRPW motif motif lies at 294 to 297 (YRPW).

The protein belongs to the HEY family. Self-associates. Interacts with HES1 and HEYL. Interacts with HDAC1, NCOR1 and SIN3A. Interacts with GATA4 and GATA6. Interacts with CCDC89/BOIP. Expressed in the somitic mesoderm, the central nervous system, the kidney, the heart, nasal epithelium, and limbs.

The protein resides in the nucleus. Transcriptional repressor which binds preferentially to the canonical E box sequence 5'-CACGTG-3'. Downstream effector of Notch signaling required for cardiovascular development. Specifically required for the Notch-induced endocardial epithelial to mesenchymal transition, which is itself criticial for cardiac valve and septum development. May be required in conjunction with HEY2 to specify arterial cell fate or identity. Promotes maintenance of neuronal precursor cells and glial versus neuronal fate specification. Represses transcription by the cardiac transcriptional activators GATA4 and GATA6 and by the neuronal bHLH factors ASCL1/MASH1 and NEUROD4/MATH3. Involved in the regulation of liver cancer cells self-renewal. In Homo sapiens (Human), this protein is Hairy/enhancer-of-split related with YRPW motif protein 1 (HEY1).